The chain runs to 102 residues: Integration host factor subunit alpha (102 aa).

This sequence belongs to the bacterial histone-like protein family. Heterodimer of an alpha and a beta chain.

In terms of biological role, this protein is one of the two subunits of integration host factor, a specific DNA-binding protein that functions in genetic recombination as well as in transcriptional and translational control. In Buchnera aphidicola subsp. Acyrthosiphon pisum (strain 5A), this protein is Integration host factor subunit alpha.